The sequence spans 137 residues: Small ribosomal subunit protein uS9 (137 aa).

The protein belongs to the universal ribosomal protein uS9 family.

This Picosynechococcus sp. (strain ATCC 27264 / PCC 7002 / PR-6) (Agmenellum quadruplicatum) protein is Small ribosomal subunit protein uS9.